Here is a 203-residue protein sequence, read N- to C-terminus: Guanylate kinase (203 aa).

Residues 3–181 enclose the Guanylate kinase-like domain; that stretch reads GTLYIVAAPS…AVAEMCAIFT (179 aa). 10–17 contacts ATP; the sequence is APSGAGKS.

Belongs to the guanylate kinase family.

It localises to the cytoplasm. It catalyses the reaction GMP + ATP = GDP + ADP. Essential for recycling GMP and indirectly, cGMP. This Xanthomonas euvesicatoria pv. vesicatoria (strain 85-10) (Xanthomonas campestris pv. vesicatoria) protein is Guanylate kinase.